The chain runs to 312 residues: Malate dehydrogenase (312 aa).

Residues 7–13 (GAAGGIG) and aspartate 34 contribute to the NAD(+) site. Substrate contacts are provided by arginine 81 and arginine 87. NAD(+) is bound by residues asparagine 94 and 117–119 (ITN). Substrate is bound by residues asparagine 119 and arginine 153. Histidine 177 functions as the Proton acceptor in the catalytic mechanism. NAD(+) is bound at residue methionine 227.

It belongs to the LDH/MDH superfamily. MDH type 1 family. As to quaternary structure, homodimer.

It catalyses the reaction (S)-malate + NAD(+) = oxaloacetate + NADH + H(+). Catalyzes the reversible oxidation of malate to oxaloacetate. The sequence is that of Malate dehydrogenase from Escherichia coli (strain SE11).